The following is a 347-amino-acid chain: UDP-N-acetylenolpyruvoylglucosamine reductase (347 aa).

One can recognise an FAD-binding PCMH-type domain in the interval 27–197; the sequence is LPARAQRLAR…TGIELRLNKM (171 aa). Arginine 173 is a catalytic residue. Serine 247 (proton donor) is an active-site residue. Glutamate 342 is an active-site residue.

It belongs to the MurB family. The cofactor is FAD.

Its subcellular location is the cytoplasm. The catalysed reaction is UDP-N-acetyl-alpha-D-muramate + NADP(+) = UDP-N-acetyl-3-O-(1-carboxyvinyl)-alpha-D-glucosamine + NADPH + H(+). It functions in the pathway cell wall biogenesis; peptidoglycan biosynthesis. Cell wall formation. The sequence is that of UDP-N-acetylenolpyruvoylglucosamine reductase from Alcanivorax borkumensis (strain ATCC 700651 / DSM 11573 / NCIMB 13689 / SK2).